Consider the following 172-residue polypeptide: Co-chaperone protein HscB homolog (172 aa).

Positions 2–74 constitute a J domain; it reads NHFELFGLVE…LRRAEYLLSL (73 aa).

It belongs to the HscB family. In terms of assembly, interacts with HscA and stimulates its ATPase activity.

Its function is as follows. Co-chaperone involved in the maturation of iron-sulfur cluster-containing proteins. Seems to help targeting proteins to be folded toward HscA. The protein is Co-chaperone protein HscB homolog of Aeromonas salmonicida (strain A449).